Consider the following 93-residue polypeptide: Progonadoliberin-2 (93 aa).

The signal sequence occupies residues 1–24 (MACQRHLLFLLLVLFAVSTQLSHG). Residue Gln25 is modified to Pyrrolidone carboxylic acid. The residue at position 34 (Gly34) is a Glycine amide.

It belongs to the GnRH family. In terms of tissue distribution, midbrain and hindbrain.

It is found in the secreted. Its function is as follows. Stimulates the secretion of gonadotropins. This chain is Progonadoliberin-2 (gnrh2), found in Aquarana catesbeiana (American bullfrog).